Here is a 236-residue protein sequence, read N- to C-terminus: Octanoyltransferase (236 aa).

Residues 36–220 (DQVPDTVLLL…HLAAVLGASS (185 aa)) enclose the BPL/LPL catalytic domain. Substrate-binding positions include 76 to 83 (RGGKITWH), 150 to 152 (AIG), and 163 to 165 (GFA). Cysteine 181 serves as the catalytic Acyl-thioester intermediate.

It belongs to the LipB family.

The protein localises to the cytoplasm. The catalysed reaction is octanoyl-[ACP] + L-lysyl-[protein] = N(6)-octanoyl-L-lysyl-[protein] + holo-[ACP] + H(+). It participates in protein modification; protein lipoylation via endogenous pathway; protein N(6)-(lipoyl)lysine from octanoyl-[acyl-carrier-protein]: step 1/2. In terms of biological role, catalyzes the transfer of endogenously produced octanoic acid from octanoyl-acyl-carrier-protein onto the lipoyl domains of lipoate-dependent enzymes. Lipoyl-ACP can also act as a substrate although octanoyl-ACP is likely to be the physiological substrate. This Thermobifida fusca (strain YX) protein is Octanoyltransferase.